Here is a 295-residue protein sequence, read N- to C-terminus: MHILLQKYYNYLRIERQLSPYTLINYQRQLEKIVVILQQNDIHSWQQVTPSVVRFVLAQSRKEGLHERSLALRLSALRQFLNYLVVQGELKVNSAVGISAPKQSKYLPKNMDMEQVQQLLTNESKEPIDLRDKAMMELMYSSGLRLSELQSLNLNSINIRSREVRVIGKGNKERILPFGRYASQAIQQWLKVRLLFNPKDEALFVSQLGNRISHRSIQKRMETWGIRQGLNGHLNPHKLRHSFATHMLENSSDLRAVQELLGHSNLSTTQIYTHLDFQHLAQVYDKAHPRAKRKK.

In terms of domain architecture, Core-binding (CB) spans 1–85 (MHILLQKYYN…ALRQFLNYLV (85 aa)). The Tyr recombinase domain maps to 106–285 (YLPKNMDMEQ…DFQHLAQVYD (180 aa)). Catalysis depends on residues arginine 145, lysine 169, histidine 237, arginine 240, and histidine 263. The active-site O-(3'-phospho-DNA)-tyrosine intermediate is the tyrosine 272.

This sequence belongs to the 'phage' integrase family. XerC subfamily. In terms of assembly, forms a cyclic heterotetrameric complex composed of two molecules of XerC and two molecules of XerD.

The protein resides in the cytoplasm. In terms of biological role, site-specific tyrosine recombinase, which acts by catalyzing the cutting and rejoining of the recombining DNA molecules. The XerC-XerD complex is essential to convert dimers of the bacterial chromosome into monomers to permit their segregation at cell division. It also contributes to the segregational stability of plasmids. This chain is Tyrosine recombinase XerC, found in Histophilus somni (strain 2336) (Haemophilus somnus).